Reading from the N-terminus, the 555-residue chain is Sulfite reductase [ferredoxin] 2 (555 aa).

Positions 1–31 (MTTARPAKARNEGQWALGNREPLNPNEEMKQ) are disordered. The segment at residues 69-161 (YTQREQGYDG…AVGLRTTEAC (93 aa)) is a cross-link (3'-(S-cysteinyl)-tyrosine (Tyr-Cys)). Residues Cys417, Cys423, Cys463, and Cys467 each contribute to the [4Fe-4S] cluster site. Residue Cys467 coordinates siroheme.

The protein belongs to the nitrite and sulfite reductase 4Fe-4S domain family. As to quaternary structure, monomer. Siroheme serves as cofactor. [4Fe-4S] cluster is required as a cofactor.

The catalysed reaction is hydrogen sulfide + 6 oxidized [2Fe-2S]-[ferredoxin] + 3 H2O = sulfite + 6 reduced [2Fe-2S]-[ferredoxin] + 7 H(+). Functionally, catalyzes the reduction of sulfite to sulfide, a step in the biosynthesis of sulfur-containing amino acids and cofactors. The protein is Sulfite reductase [ferredoxin] 2 (sir2) of Mycolicibacterium paratuberculosis (strain ATCC BAA-968 / K-10) (Mycobacterium paratuberculosis).